The primary structure comprises 114 residues: MAQIQFSRGVAEPVIPDVRLTRSRSGQSGTATFYFREPSIFNSESTDEVTGMYLVDEEGEITTTEVKGKFINGKATDIEAILIMRSPEEWDRFMRFMERYAKEQGLEFSQAGQS.

It belongs to the Psb28 family. Part of the photosystem II complex.

The protein localises to the cellular thylakoid membrane. The sequence is that of Photosystem II reaction center Psb28 protein from Rippkaea orientalis (strain PCC 8801 / RF-1) (Cyanothece sp. (strain PCC 8801)).